A 240-amino-acid polypeptide reads, in one-letter code: Molybdate/tungstate import ATP-binding protein WtpC (240 aa).

Residues 2-227 (FLKVRAEKRL…KNGEVAEFLS (226 aa)) form the ABC transporter domain. 31–38 (GPTGAGKS) contacts ATP.

The protein belongs to the ABC transporter superfamily. Sulfate/tungstate importer (TC 3.A.1.6) family. In terms of assembly, the complex is composed of two ATP-binding proteins (WtpC), two transmembrane proteins (WtpB) and a solute-binding protein (WtpA).

It localises to the cell membrane. It carries out the reaction tungstate(in) + ATP + H2O = tungstate(out) + ADP + phosphate + H(+). In terms of biological role, part of the ABC transporter complex WtpABC involved in molybdate/tungstate import. Responsible for energy coupling to the transport system. The chain is Molybdate/tungstate import ATP-binding protein WtpC (wtpC) from Archaeoglobus fulgidus (strain ATCC 49558 / DSM 4304 / JCM 9628 / NBRC 100126 / VC-16).